Here is a 370-residue protein sequence, read N- to C-terminus: Keratin-associated protein 10-7 (370 aa).

Residues 36–363 are 30 X 5 AA repeats of C-C-X(3); that stretch reads DCPESCCEPP…CSRPACCGPT (328 aa). Repeat copies occupy residues 41–45, 46–50, 67–71, 89–93, 99–103, 109–113, 114–118, 119–123, 135–139, 145–149, 155–159, 160–164, 172–176, 186–190, 208–212, 218–222, 228–232, 233–237, 238–242, 250–254, 255–259, 265–269, 270–274, 275–279, 287–291, 297–301, 302–306, 321–325, 339–343, and 359–363.

This sequence belongs to the KRTAP type 10 family. In terms of assembly, interacts with hair keratins. Restricted to a narrow region of the hair fiber cuticle, lying approximately 20 cell layers above the apex of the dermal papilla of the hair root; not detected in any other tissues.

Its function is as follows. In the hair cortex, hair keratin intermediate filaments are embedded in an interfilamentous matrix, consisting of hair keratin-associated proteins (KRTAP), which are essential for the formation of a rigid and resistant hair shaft through their extensive disulfide bond cross-linking with abundant cysteine residues of hair keratins. The matrix proteins include the high-sulfur and high-glycine-tyrosine keratins. The sequence is that of Keratin-associated protein 10-7 (KRTAP10-7) from Homo sapiens (Human).